The primary structure comprises 518 residues: Suppressor of hairless homolog (518 aa).

A disordered region spans residues 22–59 (ETDQQRSHVKERVNGTPNQNGGTSTSSKPRSVFENRPP). Positions 24 to 34 (DQQRSHVKERV) are enriched in basic and acidic residues. Positions 36–50 (GTPNQNGGTSTSSKP) are enriched in polar residues. DNA-binding regions lie at residues 89–96 (KSYGNEKR), 223–232 (RLRSQTVSTR), and 296–328 (RKVD…ERMY). The region spanning 386–476 (PVVHSLQLNG…YPTNLTFTFT (91 aa)) is the IPT/TIG domain.

This sequence belongs to the Su(H) family. In terms of assembly, interacts with activated Notch proteins.

Its subcellular location is the nucleus. Functionally, transcriptional regulator that plays a central role in Notch signaling, a signaling pathway involved in cell-cell communication that regulates a broad spectrum of cell-fate determinations. Acts as a transcriptional repressor when it is not associated with Notch proteins. When associated with some Notch protein, it acts as a transcriptional activator that activates transcription of Notch target genes. This Halocynthia roretzi (Sea squirt) protein is Suppressor of hairless homolog (RBP-JK).